The sequence spans 271 residues: Coiled-coil domain-containing protein ORF29 (271 aa).

The segment at 1 to 39 (MNEKTESEIFEEQNSLYKPIKQEKKTPSTPESEDKNDQS) is disordered. The segment covering 20-37 (IKQEKKTPSTPESEDKND) has biased composition (basic and acidic residues). A coiled-coil region spans residues 208 to 228 (RATQTQEILLNSLRKNLQMLE).

The sequence is that of Coiled-coil domain-containing protein ORF29 from Helicobacter pylori (strain 35A).